The following is a 417-amino-acid chain: Gamma-glutamyl phosphate reductase (417 aa).

Belongs to the gamma-glutamyl phosphate reductase family.

Its subcellular location is the cytoplasm. The enzyme catalyses L-glutamate 5-semialdehyde + phosphate + NADP(+) = L-glutamyl 5-phosphate + NADPH + H(+). The protein operates within amino-acid biosynthesis; L-proline biosynthesis; L-glutamate 5-semialdehyde from L-glutamate: step 2/2. Catalyzes the NADPH-dependent reduction of L-glutamate 5-phosphate into L-glutamate 5-semialdehyde and phosphate. The product spontaneously undergoes cyclization to form 1-pyrroline-5-carboxylate. This chain is Gamma-glutamyl phosphate reductase, found in Escherichia coli O157:H7.